The chain runs to 261 residues: UPF0246 protein Rmet_0978 (261 aa).

It belongs to the UPF0246 family.

The protein is UPF0246 protein Rmet_0978 of Cupriavidus metallidurans (strain ATCC 43123 / DSM 2839 / NBRC 102507 / CH34) (Ralstonia metallidurans).